We begin with the raw amino-acid sequence, 130 residues long: Protein ApaG (130 aa).

In terms of domain architecture, ApaG spans 3-127; that stretch reads SAVTRGIEVT…FSLDVPEQRR (125 aa).

The chain is Protein ApaG from Brucella suis biovar 1 (strain 1330).